Reading from the N-terminus, the 238-residue chain is NEDD4-binding protein 2-like 1 (238 aa).

Disordered regions lie at residues 1-36 (MEDS…PRRH) and 183-212 (VLHA…WNTY). The span at 20 to 31 (QPPPRPPPARGP) shows a compositional bias: pro residues. A compositionally biased stretch (polar residues) spans 192–212 (ANRNQGRNSEPSSGSGYWNTY).

In terms of assembly, interacts with dynactin subunit proteins, including DCTN4, DCTN5 and DCTN5.

Might play a role in adipocyte differentiation and triglyceride accumulation. The protein is NEDD4-binding protein 2-like 1 (N4bp2l1) of Mus musculus (Mouse).